We begin with the raw amino-acid sequence, 265 residues long: NAD kinase 1 (265 aa).

Catalysis depends on D45, which acts as the Proton acceptor. Residues 45 to 46 (DG), 122 to 123 (NE), R148, D150, and A185 contribute to the NAD(+) site.

This sequence belongs to the NAD kinase family. A divalent metal cation serves as cofactor.

The protein localises to the cytoplasm. It catalyses the reaction NAD(+) + ATP = ADP + NADP(+) + H(+). Functionally, involved in the regulation of the intracellular balance of NAD and NADP, and is a key enzyme in the biosynthesis of NADP. Catalyzes specifically the phosphorylation on 2'-hydroxyl of the adenosine moiety of NAD to yield NADP. In Bacillus cereus (strain ATCC 10987 / NRS 248), this protein is NAD kinase 1.